A 208-amino-acid polypeptide reads, in one-letter code: LexA repressor (208 aa).

The H-T-H motif DNA-binding region spans 29–49 (IREIGDSLNINSTSTVHNNIL). Residues serine 131 and lysine 168 each act as for autocatalytic cleavage activity in the active site.

This sequence belongs to the peptidase S24 family. Homodimer.

The enzyme catalyses Hydrolysis of Ala-|-Gly bond in repressor LexA.. Represses a number of genes involved in the response to DNA damage (SOS response), including recA and lexA. In the presence of single-stranded DNA, RecA interacts with LexA causing an autocatalytic cleavage which disrupts the DNA-binding part of LexA, leading to derepression of the SOS regulon and eventually DNA repair. This chain is LexA repressor, found in Finegoldia magna (strain ATCC 29328 / DSM 20472 / WAL 2508) (Peptostreptococcus magnus).